The primary structure comprises 431 residues: Probable amino-acid ABC transporter periplasmic-binding protein y4oP (431 aa).

An N-terminal signal peptide occupies residues 1-25 (MKRRTFTAGLAALPFLGSSLTRAFA).

It belongs to the bacterial solute-binding protein 1 family.

The protein localises to the periplasm. Probably part of the binding-protein-dependent transport system y4oPQRS. This system probably transports a sugar-like molecule. This Sinorhizobium fredii (strain NBRC 101917 / NGR234) protein is Probable amino-acid ABC transporter periplasmic-binding protein y4oP.